The primary structure comprises 83 residues: Molybdopterin synthase sulfur carrier subunit (83 aa).

G83 is modified (1-thioglycine; alternate). Glycyl adenylate; alternate is present on G83.

This sequence belongs to the MoaD family. MOCS2A subfamily. As to quaternary structure, heterotetramer; composed of 2 small (MOCS2A) and 2 large (MOCS2B) subunits. In terms of processing, C-terminal thiocarboxylation occurs in 2 steps, it is first acyl-adenylated (-COAMP) via the hesA/moeB/thiF part of MOCS3, then thiocarboxylated (-COSH) via the rhodanese domain of MOCS3.

Its subcellular location is the cytoplasm. It participates in cofactor biosynthesis; molybdopterin biosynthesis. In terms of biological role, acts as a sulfur carrier required for molybdopterin biosynthesis. Component of the molybdopterin synthase complex that catalyzes the conversion of precursor Z into molybdopterin by mediating the incorporation of 2 sulfur atoms into precursor Z to generate a dithiolene group. In the complex, serves as sulfur donor by being thiocarboxylated (-COSH) at its C-terminus by MOCS3. After interaction with MOCS2B, the sulfur is then transferred to precursor Z to form molybdopterin. The polypeptide is Molybdopterin synthase sulfur carrier subunit (Chlamydomonas reinhardtii (Chlamydomonas smithii)).